Here is a 144-residue protein sequence, read N- to C-terminus: Large ribosomal subunit protein uL15 (144 aa).

Positions Met1–Val48 are disordered. The span at Arg21 to Ala31 shows a compositional bias: gly residues.

This sequence belongs to the universal ribosomal protein uL15 family. In terms of assembly, part of the 50S ribosomal subunit.

Binds to the 23S rRNA. The protein is Large ribosomal subunit protein uL15 of Cupriavidus taiwanensis (strain DSM 17343 / BCRC 17206 / CCUG 44338 / CIP 107171 / LMG 19424 / R1) (Ralstonia taiwanensis (strain LMG 19424)).